A 255-amino-acid chain; its full sequence is Cytochrome c oxidase subunit 2 (255 aa).

The N-terminal stretch at 1-16 (MFNLFPPFGANTAIFN) is a signal peptide. Over 17–43 (DAPQPWQVGFQDGASPTQEGITELHDS) the chain is Mitochondrial intermembrane. A helical transmembrane segment spans residues 44–64 (IFFYLVIICFGVLWVLSSVIV). Topologically, residues 65–80 (NFNSNKSQLVYKYANH) are mitochondrial matrix. The chain crosses the membrane as a helical span at residues 81-101 (GTLIELIWTITPALVLIAIAF). Residues 102–255 (PSFKLLYLMD…KYLAWIDSQA (154 aa)) lie on the Mitochondrial intermembrane side of the membrane. Residues H189, C224, E226, C228, H232, and M235 each contribute to the Cu cation site. Residue E226 participates in Mg(2+) binding.

Belongs to the cytochrome c oxidase subunit 2 family. Component of the cytochrome c oxidase (complex IV, CIV), a multisubunit enzyme composed of a catalytic core of 3 subunits and several supernumerary subunits. The complex exists as a monomer or a dimer and forms supercomplexes (SCs) in the inner mitochondrial membrane with ubiquinol-cytochrome c oxidoreductase (cytochrome b-c1 complex, complex III, CIII). Cu cation serves as cofactor.

It localises to the mitochondrion inner membrane. It carries out the reaction 4 Fe(II)-[cytochrome c] + O2 + 8 H(+)(in) = 4 Fe(III)-[cytochrome c] + 2 H2O + 4 H(+)(out). Its function is as follows. Component of the cytochrome c oxidase, the last enzyme in the mitochondrial electron transport chain which drives oxidative phosphorylation. The respiratory chain contains 3 multisubunit complexes succinate dehydrogenase (complex II, CII), ubiquinol-cytochrome c oxidoreductase (cytochrome b-c1 complex, complex III, CIII) and cytochrome c oxidase (complex IV, CIV), that cooperate to transfer electrons derived from NADH and succinate to molecular oxygen, creating an electrochemical gradient over the inner membrane that drives transmembrane transport and the ATP synthase. Cytochrome c oxidase is the component of the respiratory chain that catalyzes the reduction of oxygen to water. Electrons originating from reduced cytochrome c in the intermembrane space (IMS) are transferred via the dinuclear copper A center (CU(A)) of subunit 2 and heme A of subunit 1 to the active site in subunit 1, a binuclear center (BNC) formed by heme A3 and copper B (CU(B)). The BNC reduces molecular oxygen to 2 water molecules using 4 electrons from cytochrome c in the IMS and 4 protons from the mitochondrial matrix. The chain is Cytochrome c oxidase subunit 2 (COX2) from Mycosarcoma maydis (Corn smut fungus).